A 500-amino-acid chain; its full sequence is Cytochrome P450 2D14 (500 aa).

Residue C446 participates in heme binding.

It belongs to the cytochrome P450 family. Heme is required as a cofactor.

The protein localises to the endoplasmic reticulum membrane. The protein resides in the microsome membrane. It carries out the reaction an organic molecule + reduced [NADPH--hemoprotein reductase] + O2 = an alcohol + oxidized [NADPH--hemoprotein reductase] + H2O + H(+). Its function is as follows. Cytochromes P450 are a group of heme-thiolate monooxygenases. In liver microsomes, this enzyme is involved in an NADPH-dependent electron transport pathway. It oxidizes a variety of structurally unrelated compounds, including steroids, fatty acids, and xenobiotics. This Bos taurus (Bovine) protein is Cytochrome P450 2D14 (CYP2D14).